Here is a 570-residue protein sequence, read N- to C-terminus: Urease subunit alpha (570 aa).

In terms of domain architecture, Urease spans 131–570; the sequence is GGFDSHIHFI…LPMAQRYFLF (440 aa). Residues His136, His138, and Lys219 each coordinate Ni(2+). Position 219 is an N6-carboxylysine (Lys219). Residue His221 participates in substrate binding. Ni(2+)-binding residues include His248 and His274. The active-site Proton donor is His322. Residue Asp362 participates in Ni(2+) binding.

The protein belongs to the metallo-dependent hydrolases superfamily. Urease alpha subunit family. As to quaternary structure, heterotrimer of UreA (gamma), UreB (beta) and UreC (alpha) subunits. Three heterotrimers associate to form the active enzyme. Ni cation is required as a cofactor. Carboxylation allows a single lysine to coordinate two nickel ions.

The protein localises to the cytoplasm. It catalyses the reaction urea + 2 H2O + H(+) = hydrogencarbonate + 2 NH4(+). It functions in the pathway nitrogen metabolism; urea degradation; CO(2) and NH(3) from urea (urease route): step 1/1. The sequence is that of Urease subunit alpha from Beijerinckia indica subsp. indica (strain ATCC 9039 / DSM 1715 / NCIMB 8712).